The primary structure comprises 256 residues: Protein crossbronx-like (256 aa).

The 163-residue stretch at 17-179 (NQGYKVLAEY…AKVSILWSCQ (163 aa)) folds into the UBC core domain.

This sequence belongs to the ubiquitin-conjugating enzyme family. FTS subfamily.

This is Protein crossbronx-like from Drosophila virilis (Fruit fly).